We begin with the raw amino-acid sequence, 551 residues long: Rqc2 homolog RqcH (551 aa).

Belongs to the NEMF family. In terms of assembly, associates with stalled 50S ribosomal subunits, binds to RqcP. Interacts with human fibronectin.

It localises to the secreted. Its subcellular location is the capsule. The protein localises to the cell surface. The protein resides in the cytoplasm. Functionally, key component of the ribosome quality control system (RQC), a ribosome-associated complex that mediates the extraction of incompletely synthesized nascent chains from stalled ribosomes and their subsequent degradation. RqcH recruits Ala-charged tRNA, and with RqcP directs the elongation of stalled nascent chains on 50S ribosomal subunits, leading to non-templated C-terminal alanine extensions (Ala tail). The Ala tail promotes nascent chain degradation. May add between 1 and at least 8 Ala residues. Binds to stalled 50S ribosomal subunits. Plays a significant role in virulence. Recombinant protein binds to immobilized human fibronectin; binding is saturable and competed by heparin. Purified protein inhibits binding of whole cells to fibronectin. This chain is Rqc2 homolog RqcH, found in Streptococcus pneumoniae serotype 2 (strain D39 / NCTC 7466).